We begin with the raw amino-acid sequence, 2346 residues long: Highly reducing polyketide synthase claI (2346 aa).

The region spanning 10 to 412 (TPAIAVVGMA…GTNCHLIVED (403 aa)) is the Ketosynthase family 3 (KS3) domain. Residues cysteine 183, histidine 295, and histidine 335 each act as for beta-ketoacyl synthase activity in the active site. A malonyl-CoA:ACP transacylase (MAT) domain region spans residues 530-842 (IFTGQGSQWP…EYFSALKRGE (313 aa)). Serine 622 acts as the For malonyltransferase activity in catalysis. Positions 912-1048 (HDLLGSKILG…GLIRTSEEDS (137 aa)) are N-terminal hotdog fold. The interval 912 to 1213 (HDLLGSKILG…INGLRFSSVD (302 aa)) is dehydratase (DH) domain. The PKS/mFAS DH domain occupies 912–1218 (HDLLGSKILG…FSSVDLGSVQ (307 aa)). Histidine 944 functions as the Proton acceptor; for dehydratase activity in the catalytic mechanism. The segment at 1060 to 1218 (IHATPAQVWY…FSSVDLGSVQ (159 aa)) is C-terminal hotdog fold. The active-site Proton donor; for dehydratase activity is aspartate 1124. Residues 1633–1946 (GSLEALQWTQ…SARHIGKILI (314 aa)) form an enoyl reductase (ER) domain region. The segment at 1972–2151 (TYLIVGGLRG…HSLDLGVVDA (180 aa)) is ketoreductase (KR) domain. One can recognise a Carrier domain in the interval 2258-2336 (SQLVEKAVTL…ALAEKMVSKV (79 aa)). Position 2296 is an O-(pantetheine 4'-phosphoryl)serine (serine 2296).

It depends on pantetheine 4'-phosphate as a cofactor.

Its pathway is secondary metabolite biosynthesis. Functionally, highly reducing polyketide synthase; part of the cla gene cluster that produces clavatol and ortho-quinone methide. The clavatol biosynthesis cluster cla and the terrestric acid cluster tra are both involved in the production of peniphenones and penilactones. The non-reducing PKS claF is responsible for the formation of clavatol from successive condensations of 3 malonyl-CoA units, presumably with a simple acetyl-CoA starter unit, and 2 methylation steps. The esterase claE probably collaborates with claF by catalyzing the hydrolysis of ACP-bound acyl intermediates to free the ACP from stalled intermediates. The clavatol oxidase claD then converts clavatol to hydroxyclavatol. Spontaneous dehydration of hydroxyclavatol leads to the accumulation of the highly active ortho-quinone methide. On the other hand, the PKS-NRPS hybrid traA is involved in the formation of crustosic acid, with the help of traB and traD. The polyketide synthase module (PKS) of traA is responsible for the synthesis of the polyketide backbone via the condensation of an acetyl-CoA starter unit with 3 malonyl-CoA units. The downstream nonribosomal peptide synthetase (NRPS) module then amidates the carboxyl end of the polyketide with L-malic acid. Because traA lacks a designated enoylreductase (ER) domain, the required activity is provided the enoyl reductase traG. Crustosic acid undergoes decarboxylation and isomerization to the terrestric acid, catalyzed by the 2-oxoglutarate-dependent dioxygenase traH. Both acids are further converted to the 2 gamma-butyrolactones (R)-5-methyltetronic acid and (S)-5-carboxylmethyltetronic acid, with involvement of the cytochrome P450 monooxygenase claJ. Spontaneous addition of the methide to these gamma-butyrolactones leads to peniphenone D and penilactone D, which undergo again stereospecific attacking by methide to give penilactones A and B. The function of the highly reducing polyketide synthase claI has not been investigated yet. This Penicillium crustosum (Blue mold fungus) protein is Highly reducing polyketide synthase claI.